A 494-amino-acid chain; its full sequence is Glutamyl-tRNA(Gln) amidotransferase subunit A (494 aa).

Active-site charge relay system residues include K80 and S155. The Acyl-ester intermediate role is filled by S179.

This sequence belongs to the amidase family. GatA subfamily. As to quaternary structure, heterotrimer of A, B and C subunits.

It catalyses the reaction L-glutamyl-tRNA(Gln) + L-glutamine + ATP + H2O = L-glutaminyl-tRNA(Gln) + L-glutamate + ADP + phosphate + H(+). Its function is as follows. Allows the formation of correctly charged Gln-tRNA(Gln) through the transamidation of misacylated Glu-tRNA(Gln) in organisms which lack glutaminyl-tRNA synthetase. The reaction takes place in the presence of glutamine and ATP through an activated gamma-phospho-Glu-tRNA(Gln). The chain is Glutamyl-tRNA(Gln) amidotransferase subunit A from Lachnoclostridium phytofermentans (strain ATCC 700394 / DSM 18823 / ISDg) (Clostridium phytofermentans).